Reading from the N-terminus, the 518-residue chain is Ankyrin repeat and SOCS box protein 3 (518 aa).

11 ANK repeats span residues 9–38 (DTCSTVGLAAREGNVKVLRKLLKKGRSVDV), 42–71 (RGWMPIHEAAYHNSVECLQMLINADSSENY), 78–107 (EGFCALHLAASQGHWKIVQILLEAGADPNA), 111–140 (EETTPLFLAVENGQIDVLRLLLQHGANVNG), 145–174 (CGWNSLHQASFQENAEIIKLLLRKGANKEC), 178–207 (FGITPLFVAAQYGKLESLSILISSGANVNC), 211–240 (DKATPLFIAAQEGHTKCVELLLSSGADPDL), 246–275 (SWQLPIHAAAQMGHTKILDLLIPLTNRACD), 279–308 (NKVSPVYSAVFGGHEDCLEILLRNGYSPDA), 315–346 (GFSSPVCMAFQKDCEFFGIVNILLKYGAQINE), and 348–373 (HLAYCLKYEKFSIFRYFLRKGCSLGP). The region spanning 441–504 (MLSARASNAW…HNYLLYEDVL (64 aa)) is the SOCS box domain.

Belongs to the ankyrin SOCS box (ASB) family. In terms of assembly, interacts with ELOB and TNFRSF1B.

It localises to the cytoplasm. It functions in the pathway protein modification; protein ubiquitination. Functionally, probable substrate-recognition component of a SCF-like ECS (Elongin-Cullin-SOCS-box protein) E3 ubiquitin-protein ligase complex which mediates the ubiquitination and subsequent proteasomal degradation of target proteins. Recognizes TNFRSF1B. Plays a role in the down-regulation of antiviral innate immunity by targeting MAVS for ubiquitin-proteasomal degradation. Also destabilizes TRAF6 by enhancing its 'Lys-48'-linked polyubiquitination. The protein is Ankyrin repeat and SOCS box protein 3 (ASB3) of Homo sapiens (Human).